Reading from the N-terminus, the 298-residue chain is HTH-type transcriptional regulator ArgP (298 aa).

In terms of domain architecture, HTH lysR-type spans 4 to 60 (LDYRWIEALDSVVSKGSFERAAEQLFISQSAVSQRIKQLEKYLAQPVLIREQPPRPT). The H-T-H motif DNA-binding region spans 21–40 (FERAAEQLFISQSAVSQRIK).

Belongs to the LysR transcriptional regulatory family. In terms of assembly, homodimer.

Its function is as follows. Controls the transcription of genes involved in arginine and lysine metabolism. This is HTH-type transcriptional regulator ArgP from Vibrio cholerae serotype O1 (strain ATCC 39541 / Classical Ogawa 395 / O395).